The following is a 564-amino-acid chain: MNNSSELIAVINGFRNSGRFCDINIVINDERINAHKLILSGASEYFSILFSNNFIDSNEYEVNLSHLDYQSVNDLIDYIYGIPLSLTNDNVKYILSTADFLQIGSAITECENYILKNLCSKNCIDFYIYADKYNNKKIESASFNTILQNILRLINDENFKYLTEESMIKILSDDMLNIKNEDFAPLILIKWLESTQQSCTVELLKCLRISLLSPQVIKSLYSHRLVSSIYECITFLNNIAFLDESFPRYHSIELISIGISNSRDKISINCYNHKKNTWEMISSRRYRCSFAVAVLDNIIYMMGGYDQSPYRSSKVIAYNTCTNSWIYDIPELKYPRSNCGGLADDEYIYCIGGIRDQDSSLTSSIDKWKPSKPYWQKYAKMREPKCDMGVAMLNGLIYVIGGIVKGDTCTDALESLSEDGWMKHQRLPIKMSNMSTIVHDGKIYISGGYNNSSVVNVISNLVLSYNPIYDEWTKLSSLNIPRINPALWSAHNKLYVGGGISDDVRTNTSETYDKEKDCWTLDNGHVLPRNYIMYKCEPIKHKYPLEKTQYTNDFLKYLESFIGS.

The BTB domain occupies 21–88 (CDINIVINDE…IYGIPLSLTN (68 aa)). Kelch repeat units follow at residues 252–297 (IELI…VLDN), 298–346 (IIYM…ADDE), 347–395 (YIYC…MLNG), 397–441 (IYVI…VHDG), 442–492 (KIYI…SAHN), and 494–539 (LYVG…CEPI).

The protein belongs to the poxviruses Kelch family. Interacts (via BTB domain) with host CUL3.

It is found in the host cytoplasm. Functionally, probable substrate-specific adapter of CUL3-containing E3 ubiquitin-protein ligases which mediate the ubiquitination and subsequent proteasomal degradation of host target proteins. In Homo sapiens (Human), this protein is Kelch repeat and BTB domain-containing protein 1 (KBTB1).